A 60-amino-acid chain; its full sequence is Large ribosomal subunit protein uL30 (60 aa).

This sequence belongs to the universal ribosomal protein uL30 family. In terms of assembly, part of the 50S ribosomal subunit.

This is Large ribosomal subunit protein uL30 from Oceanobacillus iheyensis (strain DSM 14371 / CIP 107618 / JCM 11309 / KCTC 3954 / HTE831).